Here is a 488-residue protein sequence, read N- to C-terminus: Protein nucleotidyltransferase YdiU (488 aa).

Residues G90, G92, R93, K113, D125, G126, R176, and R183 each contribute to the ATP site. D252 serves as the catalytic Proton acceptor. Mg(2+)-binding residues include N253 and D262. An ATP-binding site is contributed by D262.

This sequence belongs to the SELO family. The cofactor is Mg(2+). Mn(2+) is required as a cofactor.

The catalysed reaction is L-seryl-[protein] + ATP = 3-O-(5'-adenylyl)-L-seryl-[protein] + diphosphate. The enzyme catalyses L-threonyl-[protein] + ATP = 3-O-(5'-adenylyl)-L-threonyl-[protein] + diphosphate. It catalyses the reaction L-tyrosyl-[protein] + ATP = O-(5'-adenylyl)-L-tyrosyl-[protein] + diphosphate. It carries out the reaction L-histidyl-[protein] + UTP = N(tele)-(5'-uridylyl)-L-histidyl-[protein] + diphosphate. The catalysed reaction is L-seryl-[protein] + UTP = O-(5'-uridylyl)-L-seryl-[protein] + diphosphate. The enzyme catalyses L-tyrosyl-[protein] + UTP = O-(5'-uridylyl)-L-tyrosyl-[protein] + diphosphate. Functionally, nucleotidyltransferase involved in the post-translational modification of proteins. It can catalyze the addition of adenosine monophosphate (AMP) or uridine monophosphate (UMP) to a protein, resulting in modifications known as AMPylation and UMPylation. This Thiobacillus denitrificans (strain ATCC 25259 / T1) protein is Protein nucleotidyltransferase YdiU.